The following is a 369-amino-acid chain: FAD-dependent monooxygenase FPY4 (369 aa).

It belongs to the aromatic-ring hydroxylase family. FAD is required as a cofactor.

The protein operates within secondary metabolite biosynthesis. In terms of biological role, FAD-dependent monooxygenase; part of the gene cluster that mediates the biosynthesis of the gamma-pyrones fusapyrone (FPY) and deoxyfusapyrone (dFPY). FPY is an undecaketide and thus likely synthesized by the polyketide synthase FPY1 from acetyl-CoA functioning as starter unit and the addition of 10 malonyl-CoA extender units by successive Claisen-condensations. Next to this, FPY shares some rare features: C-glycosylated 4-deoxyglucose at C-3, a gem-dimethyl group at C-13, and an alpha-beta to beta-gamma double bond shift at C-20. During FPY biosynthesis mono-C-methyl groups are transferred to the tetra-, penta-, hexa- and heptaketide, while two C-methyl groups are transferred to the nonaketide, suggesting that the CMet domain is programmed to selectively catalyze two successive C-alpha-methylation reactions of the nonaketide, while other alpha-carbons are non- or mono-methylated only. While the origin of the 4'-deoxyglucose moiety remains opaque, its transfer to C-3 is most likely mediated by the C-glycosyltransferase FPY2. Next to this, the hydroxyl group present at C-33 and discriminating between FPY and dFPY, is likely to be installed by the cytochrome P450 monooxygenase FPY7. No putative function can be predicted for the remaining genes FPY3-FPY6. The sequence is that of FAD-dependent monooxygenase FPY4 from Fusarium mangiferae (Mango malformation disease fungus).